A 381-amino-acid chain; its full sequence is E3 ubiquitin-protein ligase RNF133 (381 aa).

In terms of domain architecture, PA spans 65–167; the sequence is SSILKRVAGV…VKGMEILHLI (103 aa). Residues 186–208 form a helical membrane-spanning segment; that stretch reads WLNHYFVSFMIVTTATLAYFTFY. The RING-type; atypical zinc finger occupies 256–297; sequence CVICFEAYKPNEIVRILTCKHFFHKNCIDPWILAHGTCPMCK. The interval 340–381 is disordered; that stretch reads LPPARTSSKVTHVQEHPTSVNVGSQPPEAEETGHPSFGQHDL. The segment covering 344–363 has biased composition (polar residues); that stretch reads RTSSKVTHVQEHPTSVNVGS.

As to quaternary structure, interacts with E3 ligase UBE2J1. In terms of processing, auto-ubiquitinated.

The protein resides in the endoplasmic reticulum membrane. The enzyme catalyses S-ubiquitinyl-[E2 ubiquitin-conjugating enzyme]-L-cysteine + [acceptor protein]-L-lysine = [E2 ubiquitin-conjugating enzyme]-L-cysteine + N(6)-ubiquitinyl-[acceptor protein]-L-lysine.. It functions in the pathway protein modification; protein ubiquitination. Has E3 ubiquitin-protein ligase activity. Plays a role in male fecundity through the interaction with the E2 ubituitin-protein ligase UBE2J1. The protein is E3 ubiquitin-protein ligase RNF133 (Rnf133) of Rattus norvegicus (Rat).